Consider the following 2167-residue polypeptide: Beige protein homolog 1 (2167 aa).

One can recognise a BEACH-type PH domain in the interval 1368 to 1499; that stretch reads KDNDSIATIW…VRDDVLRVLN (132 aa). One can recognise a BEACH domain in the interval 1545–1839; that stretch reads SANNSLIDGF…QIFQEPHPEK (295 aa). Lys-1667 is covalently cross-linked (Glycyl lysine isopeptide (Lys-Gly) (interchain with G-Cter in ubiquitin)). WD repeat units follow at residues 1927–1965, 1976–2015, 2017–2054, 2072–2111, and 2129–2167; these read THMAQITSFAYWKLGEFITGDKNGLIKVWKYRKDKHSVS, GHLCELKEMRCYHDYNTLLTLDISGLVYVWDMINFELVRQ, TNDAQKVAISQHAGSIMVLTKNNAISIFNLNGQIYTSK, KLDAGYRKHIYWKEMEILLVGFEDGTIEIYELFLNFHNEW, and SIKGQGKTYLSQKRRKDTAEPHEIEVIAGTLDGRLAIWY.

It is found in the cytoplasm. Its subcellular location is the membrane. In terms of biological role, may be involved in protein sorting and cell wall formation. This is Beige protein homolog 1 (BPH1) from Saccharomyces cerevisiae (strain ATCC 204508 / S288c) (Baker's yeast).